Reading from the N-terminus, the 51-residue chain is MARYRRCRSQSRSRCCRPRRRCRRRRRQSCRARRRATRCCRRRYRLRCRRY.

It belongs to the protamine P1 family. Testis.

The protein localises to the nucleus. It localises to the chromosome. In terms of biological role, protamines substitute for histones in the chromatin of sperm during the haploid phase of spermatogenesis. They compact sperm DNA into a highly condensed, stable and inactive complex. The protein is Sperm protamine P1 (PRM1) of Trachypithecus johnii (Nilgiri langur).